The sequence spans 72 residues: Omega-conotoxin-like SVIA mutant 1 (72 aa).

The first 22 residues, 1-22, serve as a signal peptide directing secretion; sequence MKLTCVVIVAVLLLTACQLITA. Positions 23–48 are excised as a propeptide; it reads EDSRGAQKHRTLRSTARRSKSELTTR. Cystine bridges form between C49–C63, C56–C66, and C62–C71. The residue at position 55 (P55) is a 4-hydroxyproline.

Belongs to the conotoxin O1 superfamily. As to expression, expressed by the venom duct.

The protein resides in the secreted. In terms of biological role, omega-conotoxins act at presynaptic membranes, they bind and block voltage-gated calcium channels (Cav). In Conus striatus (Striated cone), this protein is Omega-conotoxin-like SVIA mutant 1.